Reading from the N-terminus, the 151-residue chain is Small ribosomal subunit protein uS15 (151 aa).

The protein belongs to the universal ribosomal protein uS15 family.

In Ciona intestinalis (Transparent sea squirt), this protein is Small ribosomal subunit protein uS15 (RPS13).